The following is a 289-amino-acid chain: Ribosomal RNA small subunit methyltransferase A (289 aa).

Residues Asn-33, Val-35, Gly-60, Glu-81, Asp-111, and Asn-130 each contribute to the S-adenosyl-L-methionine site.

Belongs to the class I-like SAM-binding methyltransferase superfamily. rRNA adenine N(6)-methyltransferase family. RsmA subfamily.

It localises to the cytoplasm. The enzyme catalyses adenosine(1518)/adenosine(1519) in 16S rRNA + 4 S-adenosyl-L-methionine = N(6)-dimethyladenosine(1518)/N(6)-dimethyladenosine(1519) in 16S rRNA + 4 S-adenosyl-L-homocysteine + 4 H(+). Its function is as follows. Specifically dimethylates two adjacent adenosines (A1518 and A1519) in the loop of a conserved hairpin near the 3'-end of 16S rRNA in the 30S particle. May play a critical role in biogenesis of 30S subunits. The chain is Ribosomal RNA small subunit methyltransferase A from Corynebacterium efficiens (strain DSM 44549 / YS-314 / AJ 12310 / JCM 11189 / NBRC 100395).